The primary structure comprises 594 residues: Probable translation initiation factor IF-2 (594 aa).

Residues 5 to 224 (YRAPIVVVVG…LMAGLTQRLV (220 aa)) enclose the tr-type G domain. The G1 stretch occupies residues 14–21 (GHVDVGKT). 14–21 (GHVDVGKT) contacts GTP. The segment at 39–43 (MITQH) is G2. The interval 80–83 (DTPG) is G3. GTP is bound by residues 80 to 84 (DTPGH) and 134 to 137 (NKVD). The G4 stretch occupies residues 134 to 137 (NKVD). Residues 202–204 (SAV) form a G5 region.

This sequence belongs to the TRAFAC class translation factor GTPase superfamily. Classic translation factor GTPase family. IF-2 subfamily.

Its function is as follows. Function in general translation initiation by promoting the binding of the formylmethionine-tRNA to ribosomes. Seems to function along with eIF-2. This chain is Probable translation initiation factor IF-2, found in Caldivirga maquilingensis (strain ATCC 700844 / DSM 13496 / JCM 10307 / IC-167).